The chain runs to 417 residues: Serine hydroxymethyltransferase (417 aa).

(6S)-5,6,7,8-tetrahydrofolate-binding positions include L121 and 125–127 (GHL). K229 bears the N6-(pyridoxal phosphate)lysine mark. 354–356 (SPF) contributes to the (6S)-5,6,7,8-tetrahydrofolate binding site.

This sequence belongs to the SHMT family. In terms of assembly, homodimer. It depends on pyridoxal 5'-phosphate as a cofactor.

It is found in the cytoplasm. It catalyses the reaction (6R)-5,10-methylene-5,6,7,8-tetrahydrofolate + glycine + H2O = (6S)-5,6,7,8-tetrahydrofolate + L-serine. It functions in the pathway one-carbon metabolism; tetrahydrofolate interconversion. It participates in amino-acid biosynthesis; glycine biosynthesis; glycine from L-serine: step 1/1. Functionally, catalyzes the reversible interconversion of serine and glycine with tetrahydrofolate (THF) serving as the one-carbon carrier. This reaction serves as the major source of one-carbon groups required for the biosynthesis of purines, thymidylate, methionine, and other important biomolecules. Also exhibits THF-independent aldolase activity toward beta-hydroxyamino acids, producing glycine and aldehydes, via a retro-aldol mechanism. In Azotobacter vinelandii (strain DJ / ATCC BAA-1303), this protein is Serine hydroxymethyltransferase.